The sequence spans 258 residues: Venom plasminogen activator TSV-PA (258 aa).

An N-terminal signal peptide occupies residues 1–18 (MELIRVLANLLILQLSYA). The propeptide occupies 19-24 (QKSSEL). In terms of domain architecture, Peptidase S1 spans 25–249 (VFGGDECNIN…YLDWIKSIIA (225 aa)). Cystine bridges form between Cys-31–Cys-163, Cys-50–Cys-66, Cys-98–Cys-256, Cys-142–Cys-210, Cys-174–Cys-189, and Cys-200–Cys-225. Active-site charge relay system residues include His-65 and Asp-110. A glycan (N-linked (GlcNAc...) asparagine) is linked at Asn-185. Ser-204 serves as the catalytic Charge relay system.

Belongs to the peptidase S1 family. Snake venom subfamily. Monomer. Expressed by the venom gland.

The protein resides in the secreted. In terms of biological role, snake venom serine protease that activates plasminogen. The protein is Venom plasminogen activator TSV-PA of Trimeresurus stejnegeri (Chinese green tree viper).